The chain runs to 37 residues: Cytochrome b6-f complex subunit 5 (37 aa).

A helical transmembrane segment spans residues 5–25 (LLSGIVLGLIPITLAGLFVTA).

It belongs to the PetG family. The 4 large subunits of the cytochrome b6-f complex are cytochrome b6, subunit IV (17 kDa polypeptide, PetD), cytochrome f and the Rieske protein, while the 4 small subunits are PetG, PetL, PetM and PetN. The complex functions as a dimer.

The protein resides in the plastid. Its subcellular location is the chloroplast thylakoid membrane. Component of the cytochrome b6-f complex, which mediates electron transfer between photosystem II (PSII) and photosystem I (PSI), cyclic electron flow around PSI, and state transitions. PetG is required for either the stability or assembly of the cytochrome b6-f complex. This is Cytochrome b6-f complex subunit 5 from Chara vulgaris (Common stonewort).